The following is an 833-amino-acid chain: Leucine--tRNA ligase (833 aa).

Residues 41–52 carry the 'HIGH' region motif; that stretch reads PYPSGAGLHVGH. The short motif at 610-614 is the 'KMSKS' region element; it reads KMSKS. Position 613 (lysine 613) interacts with ATP.

Belongs to the class-I aminoacyl-tRNA synthetase family.

The protein resides in the cytoplasm. The catalysed reaction is tRNA(Leu) + L-leucine + ATP = L-leucyl-tRNA(Leu) + AMP + diphosphate. This chain is Leucine--tRNA ligase, found in Streptococcus sanguinis (strain SK36).